Consider the following 236-residue polypeptide: LexA repressor (236 aa).

The H-T-H motif DNA-binding region spans 26–46 (FDEMKEALDLASKSGIHRLIT). The disordered stretch occupies residues 84–107 (SPSVIEGGQGRSSPAPRPAANNDD). Residues Ser-157 and Lys-195 each act as for autocatalytic cleavage activity in the active site.

It belongs to the peptidase S24 family. Homodimer.

It carries out the reaction Hydrolysis of Ala-|-Gly bond in repressor LexA.. Represses a number of genes involved in the response to DNA damage (SOS response), including recA and lexA. In the presence of single-stranded DNA, RecA interacts with LexA causing an autocatalytic cleavage which disrupts the DNA-binding part of LexA, leading to derepression of the SOS regulon and eventually DNA repair. In Chelativorans sp. (strain BNC1), this protein is LexA repressor.